The chain runs to 274 residues: Putative homeobox protein Meis3-like 1 (274 aa).

Residues 12–65 enclose the MEIS N-terminal domain; the sequence is GGDVCSSDSFNEDNTAFAKQVRSERPFFSSNPELDNLMIQAIQVLRFHLLELEK. Disordered stretches follow at residues 108-167 and 228-248; these read DSGS…KRGI and NRTG…GYTE. The span at 123-135 shows a compositional bias: polar residues; sequence GLASQSGDNSSDQ. A DNA-binding region (homeobox) is located at residues 161-223; sequence RNKKRGIFPK…NARRRIVQPM (63 aa).

It belongs to the TALE/MEIS homeobox family.

The protein resides in the nucleus. The chain is Putative homeobox protein Meis3-like 1 (MEIS3P1) from Homo sapiens (Human).